Here is a 239-residue protein sequence, read N- to C-terminus: Purine nucleoside phosphorylase DeoD-type (239 aa).

Residue H5 participates in a purine D-ribonucleoside binding. Residues G21 and R25 each contribute to the phosphate site. K27 carries the N6-acetyllysine modification. Residues R44 and 88 to 91 (RVGS) contribute to the phosphate site. A purine D-ribonucleoside-binding positions include 180-182 (EME) and 204-205 (SD). Residue D205 is the Proton donor of the active site.

It belongs to the PNP/UDP phosphorylase family. As to quaternary structure, homohexamer; trimer of homodimers.

It carries out the reaction a purine D-ribonucleoside + phosphate = a purine nucleobase + alpha-D-ribose 1-phosphate. The catalysed reaction is a purine 2'-deoxy-D-ribonucleoside + phosphate = a purine nucleobase + 2-deoxy-alpha-D-ribose 1-phosphate. Catalyzes the reversible phosphorolytic breakdown of the N-glycosidic bond in the beta-(deoxy)ribonucleoside molecules, with the formation of the corresponding free purine bases and pentose-1-phosphate. This is Purine nucleoside phosphorylase DeoD-type from Escherichia coli O81 (strain ED1a).